The chain runs to 277 residues: Orotidine 5'-phosphate decarboxylase (277 aa).

Substrate contacts are provided by residues aspartate 40, 62-64, 93-102, tyrosine 229, and arginine 247; these read KTH and DRKFIDIGNT. Lysine 95 acts as the Proton donor in catalysis.

This sequence belongs to the OMP decarboxylase family.

It catalyses the reaction orotidine 5'-phosphate + H(+) = UMP + CO2. It functions in the pathway pyrimidine metabolism; UMP biosynthesis via de novo pathway; UMP from orotate: step 2/2. This is Orotidine 5'-phosphate decarboxylase (pyrG) from Aspergillus kawachii (White koji mold).